Reading from the N-terminus, the 225-residue chain is Uracil-DNA glycosylase (225 aa).

The active-site Proton acceptor is the D68.

It belongs to the uracil-DNA glycosylase (UDG) superfamily. UNG family.

The protein localises to the cytoplasm. It carries out the reaction Hydrolyzes single-stranded DNA or mismatched double-stranded DNA and polynucleotides, releasing free uracil.. Its function is as follows. Excises uracil residues from the DNA which can arise as a result of misincorporation of dUMP residues by DNA polymerase or due to deamination of cytosine. This chain is Uracil-DNA glycosylase, found in Mycolicibacterium vanbaalenii (strain DSM 7251 / JCM 13017 / BCRC 16820 / KCTC 9966 / NRRL B-24157 / PYR-1) (Mycobacterium vanbaalenii).